The following is a 589-amino-acid chain: MATRKVRYKKLSVKTQLAVLREDQIEASEYESLTSENQIATGVEQAEENEYHLQAVLKGAGVAADQEIPVPPPQQSELDYDQFYPQKVAKTSTYIRFSQTVEECISCLYDMTEDDETFLKSYNMKLTPSARLSEDDFERIMDVYEDMAANITPFSAIDQTVPSYQEMLRGLEPLDSTKVMVHAKQIYEYWKSRREISKNRPLNPTLKFETHAESDELDPYVCFRRREIRQTRKTRARDVQSADKLKRLRKELEEGRQLILAAHNRELLKADMLKVERAIFDQRAIIKEQKLRLGIRTGDEDLVNQKPQKRKAPEAPSAQRPPPPPQIRMPVRPDGRPAESDLVQLSDRLAEKNAELIIEIEKKIQNHIDWNKNYVDLTGKPLSPVQGPRQDLGFRPAKTQYLMTPPASASSGSMDEPTPMDLDKPKPNPPPPVKFRGVAQDEQSLAHPPSYRRRIGRLNRLWIDRRGLPSPARDLSEEQSDRWKYDQSSDDEDDAPVYMLDPFDTKALRYRASIPLQTVTRPPPPVINRQFIPPGAVPQQLAQSSFAPGQPQPQSQPQPNQSQSLPLPQPQQPVAQPQPQPQPQAQPVS.

Disordered regions lie at residues 298–339 (GDED…RPAE), 403–430 (MTPPASASSGSMDEPTPMDLDKPKPNPP), 468–497 (LPSPARDLSEEQSDRWKYDQSSDDEDDAPV), and 516–589 (LQTV…QPVS). A compositionally biased stretch (basic and acidic residues) spans 474 to 487 (DLSEEQSDRWKYDQ). Residues 557-566 (PQPNQSQSLP) are compositionally biased toward low complexity. Positions 567 to 589 (LPQPQQPVAQPQPQPQPQAQPVS) are enriched in pro residues.

The protein belongs to the enhancer of polycomb family. In terms of assembly, component of the NuA4 histone acetyltransferase complex.

It is found in the nucleus. In terms of biological role, component of the NuA4 histone acetyltransferase complex which is involved in transcriptional activation of selected genes principally by acetylation of nucleosomal histone H4 and H2A. The NuA4 complex is also involved in DNA repair. Involved in gene silencing by neighboring heterochromatin, blockage of the silencing spreading along the chromosome, and required for cell cycle progression through G2/M. The polypeptide is Enhancer of polycomb-like protein 1 (epl-1) (Neurospora crassa (strain ATCC 24698 / 74-OR23-1A / CBS 708.71 / DSM 1257 / FGSC 987)).